The primary structure comprises 378 residues: MENNRLSQDEIDALLNGTGSTLDEPEIPEVDDLSEMERDAIGEIGNISFGSSATALSTLLNQKVDITTPSVTVIPRSKISDAFPEPYVAIEVNYTEGFSGSNLLVVEQSDAAIIADLMIGGDGKGADPSLGEIHLSAVQEAMNQMMGSAATSMSTVFSKKIDISPPRVELLDVTEEKGTDRIPDDEMLVKVSFNLKVGELIDSSIMQLYPLTFAKDLISSLMNSESAEEEETVQPEVTYEQPKEPVTPEPRIEPKQQQQPPKRQGTAKKAAPVQVSPVEFSAFDPNEAVQAPIHNLDMLLDIPLSITVELGRTKRSVKEILELSAGSIIELDKLAGEPVDILVNQRIVAKGEVVVIEENFGVRVTDILSQAERINNLK.

The interval 225–271 is disordered; sequence ESAEEEETVQPEVTYEQPKEPVTPEPRIEPKQQQQPPKRQGTAKKAA. The span at 255 to 264 shows a compositional bias: low complexity; that stretch reads KQQQQPPKRQ.

Belongs to the FliN/MopA/SpaO family.

It is found in the cell membrane. In terms of biological role, component of the flagellar switch. Binds CheY-P and increases its hydrolysis rate in vitro. May function constitutively to remove CheY-P around the flagellar switch to maintain an optimal level of CheY-P whereas CheC may function after addition of an attractant to cope with increased levels of CheY-P. The chain is Flagellar motor switch phosphatase FliY (fliY) from Bacillus subtilis (strain 168).